Consider the following 352-residue polypeptide: Minor capsid protein VP2 (352 aa).

Residue Gly2 is the site of N-myristoyl glycine; by host attachment. The tract at residues 273-308 is D1; it reads SGEFIEKTLAPGGANQRIAPQWMLPLLLGLYGTVTP. The chain crosses the membrane as a helical span at residues 290 to 310; the sequence is IAPQWMLPLLLGLYGTVTPAL. The segment at 312-352 is disordered; the sequence is AYEDAPSKKKRRMSRGSSQKAKGPRASSKTSYKRRRRSTRS. Residues 313–352 form a DNA-binding region; the sequence is YEDAPSKKKRRMSRGSSQKAKGPRASSKTSYKRRRRSTRS. The short motif at 316–324 is the Nuclear localization signal element; it reads APSKKKRRM. Over residues 342-352 the composition is skewed to basic residues; that stretch reads SYKRRRRSTRS.

The protein belongs to the polyomaviruses capsid protein VP2 family. In terms of assembly, forms homooligomers, and heterooligomers with VP3 in the endoplasmic reticulum membrane. Interacts (via D1 domain) with VP1. Interacts (via D1 domain) with VP1.

It localises to the virion. Its subcellular location is the host nucleus. The protein resides in the host endoplasmic reticulum. The protein localises to the host endoplasmic reticulum membrane. Its function is as follows. Structural protein that resides within the core of the capsid surrounded by 72 VP1 pentamers. Participates in host cell receptor binding together with VP1. Following virus endocytosis and trafficking to the endoplasmic reticulum, VP2 and VP3 form oligomers and integrate into the endoplasmic reticulum membrane. Heterooligomer VP2-VP3 may create a viroporin for transporting the viral genome across the endoplasmic reticulum membrane to the cytoplasm. Nuclear entry of the viral DNA involves the selective exposure and importin recognition of VP2 or VP3 nuclear localization signal (shared C-terminus). Plays a role in virion assembly within the nucleus in particular through a DNA-binding domain located in the C-terminal region. An N-terminal myristoylation suggests a scaffold function for virion assembly. Structural protein that resides within the core of the capsid surrounded by 72 VP1 pentamers. Following virus endocytosis and trafficking to the endoplasmic reticulum, VP2 and VP3 form oligomers and integrate into the endoplasmic reticulum membrane. Heterooligomer VP2-VP3 may create a viroporin for transporting the viral genome across the endoplasmic reticulum membrane to the cytoplasm. Nuclear entry of the viral DNA involves the selective exposure and importin recognition of VP2 or VP3 nuclear localization signal (shared C-terminus). Plays a role in virion assembly within the nucleus. May participate in host cell lysis when associated with VP4. Functionally, viroporin inducing perforation of cellular membranes to trigger virus progeny release. Forms pores of 3 nm inner diameter. VP4 is expressed about 24 hours after the late structural proteins and is not incorporated into the mature virion. The polypeptide is Minor capsid protein VP2 (Simian virus 12 (strain wt100) (SV-12)).